The chain runs to 180 residues: Large ribosomal subunit protein uL16 (180 aa).

This sequence belongs to the universal ribosomal protein uL16 family.

In Thermococcus sibiricus (strain DSM 12597 / MM 739), this protein is Large ribosomal subunit protein uL16.